Here is a 360-residue protein sequence, read N- to C-terminus: Cytochrome b-c1 complex subunit 2, mitochondrial (360 aa).

A mitochondrion-targeting transit peptide spans 1 to 15 (MLSSRLQFAQQTARK).

It belongs to the peptidase M16 family. UQCRC2/QCR2 subfamily. Component of the ubiquinol-cytochrome c oxidoreductase (cytochrome b-c1 complex, complex III, CIII), a multisubunit enzyme composed of 3 respiratory subunits cytochrome b, cytochrome c1 and Rieske protein, 2 core protein subunits, and additional low-molecular weight protein subunits. The complex exists as an obligatory dimer and forms supercomplexes (SCs) in the inner mitochondrial membrane with cytochrome c oxidase (complex IV, CIV).

The protein resides in the mitochondrion inner membrane. In terms of biological role, component of the ubiquinol-cytochrome c oxidoreductase, a multisubunit transmembrane complex that is part of the mitochondrial electron transport chain which drives oxidative phosphorylation. The respiratory chain contains 3 multisubunit complexes succinate dehydrogenase (complex II, CII), ubiquinol-cytochrome c oxidoreductase (cytochrome b-c1 complex, complex III, CIII) and cytochrome c oxidase (complex IV, CIV), that cooperate to transfer electrons derived from NADH and succinate to molecular oxygen, creating an electrochemical gradient over the inner membrane that drives transmembrane transport and the ATP synthase. The cytochrome b-c1 complex catalyzes electron transfer from ubiquinol to cytochrome c, linking this redox reaction to translocation of protons across the mitochondrial inner membrane, with protons being carried across the membrane as hydrogens on the quinol. In the process called Q cycle, 2 protons are consumed from the matrix, 4 protons are released into the intermembrane space and 2 electrons are passed to cytochrome c. The chain is Cytochrome b-c1 complex subunit 2, mitochondrial (QCR2) from Kluyveromyces lactis (strain ATCC 8585 / CBS 2359 / DSM 70799 / NBRC 1267 / NRRL Y-1140 / WM37) (Yeast).